The following is a 133-amino-acid chain: Beta-synuclein (133 aa).

2 repeat units span residues E20–A30 and E31–G41. The 4 X 11 AA tandem repeats of [EGS]-K-T-K-[EQ]-[GQ]-V-X(4) stretch occupies residues E20–G66. A 3; approximate repeat occupies S42–A55. S45 carries the post-translational modification Phosphoserine. Copy 4 of the repeat occupies E56–G66. The segment at E96–A133 is disordered. Residues V97–A133 are compositionally biased toward acidic residues. A Phosphoserine; by BARK1, CK2 and GRK5 modification is found at S117.

This sequence belongs to the synuclein family. Post-translationally, phosphorylated. Phosphorylation by G-protein coupled receptor kinases (GRK) is more efficient than phosphorylation by CK1, CK2 and CaM-kinase II. As to expression, highly expressed in the brain.

The protein resides in the cytoplasm. May be involved in neuronal plasticity. This chain is Beta-synuclein (Sncb), found in Mus musculus (Mouse).